The chain runs to 158 residues: Small ribosomal subunit protein bS16 (158 aa).

The span at 111–121 (AAAGLAEAPTK) shows a compositional bias: low complexity. The interval 111 to 158 (AAAGLAEAPTKPAKKAPKAEAAPKTEAAPKADAPKTEEQAGAGSGEQG) is disordered. Basic and acidic residues predominate over residues 127–148 (PKAEAAPKTEAAPKADAPKTEE).

Belongs to the bacterial ribosomal protein bS16 family.

In Salinispora arenicola (strain CNS-205), this protein is Small ribosomal subunit protein bS16.